Consider the following 503-residue polypeptide: Aminoaldehyde dehydrogenase 1, peroxisomal (503 aa).

N27, I28, D99, and L189 together coordinate Na(+). Position 238–245 (238–245 (GSSATGSK)) interacts with NAD(+). The active-site Proton acceptor is the E260. Residues C294 and E393 each coordinate NAD(+). The Nucleophile role is filled by C294. Residues 501–503 (SKL) carry the Microbody targeting signal motif.

Belongs to the aldehyde dehydrogenase family. In terms of assembly, forms homodimers.

The protein resides in the peroxisome. The catalysed reaction is 3-aminopropanal + NAD(+) + H2O = beta-alanine + NADH + 2 H(+). It carries out the reaction 4-aminobutanal + NAD(+) + H2O = 4-aminobutanoate + NADH + 2 H(+). The enzyme catalyses 4-guanidinobutanal + NAD(+) + H2O = 4-guanidinobutanoate + NADH + 2 H(+). Its pathway is amine and polyamine biosynthesis; betaine biosynthesis via choline pathway; betaine from betaine aldehyde: step 1/1. Its function is as follows. Dehydrogenase that catalyzes the oxidation of several aminoaldehydes. Metabolizes and detoxifies aldehyde products of polyamine degradation to non-toxic amino acids. Catalyzes the oxidation of 3-aminopropanal to beta-alanine. Catalyzes the oxidation of 4-aminobutanal to 4-aminobutanoate. Catalyzes the oxidation of 4-guanidinobutanal to 4-guanidinobutanoate. In Pisum sativum (Garden pea), this protein is Aminoaldehyde dehydrogenase 1, peroxisomal.